Consider the following 192-residue polypeptide: Fe/S biogenesis protein NfuA (192 aa).

[4Fe-4S] cluster contacts are provided by Cys-150 and Cys-153.

The protein belongs to the NfuA family. As to quaternary structure, homodimer. It depends on [4Fe-4S] cluster as a cofactor.

Its function is as follows. Involved in iron-sulfur cluster biogenesis. Binds a 4Fe-4S cluster, can transfer this cluster to apoproteins, and thereby intervenes in the maturation of Fe/S proteins. Could also act as a scaffold/chaperone for damaged Fe/S proteins. In Vesicomyosocius okutanii subsp. Calyptogena okutanii (strain HA), this protein is Fe/S biogenesis protein NfuA.